The following is a 78-amino-acid chain: Esculentin-2PLa (78 aa).

The first 22 residues, 1-22 (MFTTKKSMLLLFFLGTISLSLC), serve as a signal peptide directing secretion. Residues 23 to 39 (EEERGADEEEGDGEKLM) constitute a propeptide that is removed on maturation. The cysteines at positions 72 and 78 are disulfide-linked.

As to expression, expressed by the skin glands.

Its subcellular location is the secreted. Antimicrobial activity against the Gram-negative bacterium E.coli, the Gram-positive bacterium S.aureus and the yeast C.albicans. This chain is Esculentin-2PLa, found in Lithobates palustris (Pickerel frog).